The primary structure comprises 24 residues: Brevinin-1BYa (24 aa).

A disulfide bond links Cys18 and Cys24.

In terms of tissue distribution, expressed by the skin glands.

It is found in the secreted. Antibacterial activity against Gram-positive bacterium S.aureus and Gram-negative bacterium E.coli. High antifungal activity against C.albicans and a strong hemolytic activity. In Rana boylii (Foothill yellow-legged frog), this protein is Brevinin-1BYa.